Reading from the N-terminus, the 312-residue chain is Methionyl-tRNA formyltransferase (312 aa).

A (6S)-5,6,7,8-tetrahydrofolate-binding site is contributed by 112–115 (SLLP).

The protein belongs to the Fmt family.

It catalyses the reaction L-methionyl-tRNA(fMet) + (6R)-10-formyltetrahydrofolate = N-formyl-L-methionyl-tRNA(fMet) + (6S)-5,6,7,8-tetrahydrofolate + H(+). In terms of biological role, attaches a formyl group to the free amino group of methionyl-tRNA(fMet). The formyl group appears to play a dual role in the initiator identity of N-formylmethionyl-tRNA by promoting its recognition by IF2 and preventing the misappropriation of this tRNA by the elongation apparatus. The chain is Methionyl-tRNA formyltransferase from Syntrophus aciditrophicus (strain SB).